We begin with the raw amino-acid sequence, 182 residues long: Ribosome-recycling factor (182 aa).

The protein belongs to the RRF family.

It is found in the cytoplasm. In terms of biological role, responsible for the release of ribosomes from messenger RNA at the termination of protein biosynthesis. May increase the efficiency of translation by recycling ribosomes from one round of translation to another. The polypeptide is Ribosome-recycling factor (Prochlorococcus marinus (strain MIT 9215)).